The following is a 187-amino-acid chain: UPF0301 protein VS_2679 (187 aa).

Belongs to the UPF0301 (AlgH) family.

The sequence is that of UPF0301 protein VS_2679 from Vibrio atlanticus (strain LGP32) (Vibrio splendidus (strain Mel32)).